Here is a 524-residue protein sequence, read N- to C-terminus: RNA-binding protein 39 (524 aa).

Residues 1–146 (MADDIDIEAM…PVREPIDNLT (146 aa)) form a disordered region. N-acetylalanine is present on Ala2. Residues 14-32 (PYKKDENKLSSANGHEERS) are compositionally biased toward basic and acidic residues. Composition is skewed to basic residues over residues 33 to 56 (KKRKKSKSRSRSHERKRSKSKERK) and 64 to 95 (KKSKSRERKRSRSKERRRSRSRSRDRRFRGRY). The residue at position 95 (Tyr95) is a Phosphotyrosine. 2 positions are modified to phosphoserine: Ser97 and Ser100. A Glycyl lysine isopeptide (Lys-Gly) (interchain with G-Cter in SUMO2) cross-link involves residue Lys111. Position 117 is a phosphoserine (Ser117). Residue Lys119 forms a Glycyl lysine isopeptide (Lys-Gly) (interchain with G-Cter in SUMO2) linkage. Over residues 119–130 (KLSRRRSRSKSP) the composition is skewed to basic residues. Phosphoserine occurs at positions 121 and 136. Residues 131–146 (FRKDKSPVREPIDNLT) show a composition bias toward basic and acidic residues. The residue at position 146 (Thr146) is a Phosphothreonine. Positions 153-230 (RTVFCMQLAA…VPIIVQASQA (78 aa)) constitute an RRM 1 domain. Residue Lys244 forms a Glycyl lysine isopeptide (Lys-Gly) (interchain with G-Cter in SUMO2) linkage. Positions 250–328 (MRLYVGSLHF…RPMKVGHVTE (79 aa)) constitute an RRM 2 domain. An activating domain region spans residues 291 to 355 (KGYGFITFSD…RTGIDLGTTG (65 aa)). The interaction with JUN stretch occupies residues 291–400 (KGYGFITFSD…ADLQTRLSQQ (110 aa)). Residues Ser334, Ser337, and Ser341 each carry the phosphoserine modification. Residues 355-400 (GRLQLMARLAEGTGLQIPPAAQQALQMSGSLAFGAVADLQTRLSQQ) form an interaction with ESR1 and ESR2 region. The interaction with NCOA6 stretch occupies residues 400-524 (QTEASALAAA…ATQLLVPSRR (125 aa)). In terms of domain architecture, RRM 3 spans 439 to 502 (EIKDDVIEEC…KMITAAYVPL (64 aa)).

This sequence belongs to the splicing factor SR family. As to quaternary structure, interacts with NCOA6 and JUN. Interacts with ESR1 and ESR2, in the presence of estradiol (E2). Interacts with RSRC1 (via Arg/Ser-rich domain). Interacts with SF3B1. Interacts with ZNF106 (via N-terminus).

It is found in the nucleus speckle. Its function is as follows. RNA-binding protein that acts as a pre-mRNA splicing factor. Acts by promoting exon inclusion via regulation of exon cassette splicing. Also acts as a transcriptional coactivator for steroid nuclear receptors ESR1/ER-alpha and ESR2/ER-beta, and JUN/AP-1, independently of the pre-mRNA splicing factor activity. In Pongo abelii (Sumatran orangutan), this protein is RNA-binding protein 39 (RBM39).